Here is a 105-residue protein sequence, read N- to C-terminus: Iron-sulfur cluster assembly protein CyaY (105 aa).

It belongs to the frataxin family.

In terms of biological role, involved in iron-sulfur (Fe-S) cluster assembly. May act as a regulator of Fe-S biogenesis. This is Iron-sulfur cluster assembly protein CyaY from Psychromonas ingrahamii (strain DSM 17664 / CCUG 51855 / 37).